A 201-amino-acid chain; its full sequence is Small ribosomal subunit protein uS4c (201 aa).

The tract at residues 20 to 44 (GLTNKKPRAGSDLRNQSRSGKKSQY) is disordered. The S4 RNA-binding domain maps to 89-150 (MRLDNILFRL…EQKSKALIQI (62 aa)).

The protein belongs to the universal ribosomal protein uS4 family. As to quaternary structure, part of the 30S ribosomal subunit. Contacts protein S5. The interaction surface between S4 and S5 is involved in control of translational fidelity.

The protein resides in the plastid. Its subcellular location is the chloroplast. One of the primary rRNA binding proteins, it binds directly to 16S rRNA where it nucleates assembly of the body of the 30S subunit. Functionally, with S5 and S12 plays an important role in translational accuracy. In Nicotiana tomentosiformis (Tobacco), this protein is Small ribosomal subunit protein uS4c (rps4).